The chain runs to 301 residues: Nitric oxide synthase-interacting protein (301 aa).

Ser36 bears the Phosphoserine mark. Residues 55–75 (DPVVTPDGYLYEREAILEYIL) are U-box-like. Positions 78-101 (KKEIARQMKAYEKQRGTRREEQKE) match the Nuclear localization signal motif. Ser107 bears the Phosphoserine mark. A disordered region spans residues 132–157 (KALSGTSPDDVQPGPSVGPPSKDKDK).

It belongs to the NOSIP family. As to quaternary structure, interacts with NOS1 and NOS3. Interacts with PP2A holoenzyme, containing PPP2CA, PPP2CB, PPP2R1A and PPP2R2A subunits. In terms of tissue distribution, expressed in heart, brain and lung. Present in endothelial cells (at protein level).

It localises to the cytoplasm. The protein resides in the nucleus. It carries out the reaction S-ubiquitinyl-[E2 ubiquitin-conjugating enzyme]-L-cysteine + [acceptor protein]-L-lysine = [E2 ubiquitin-conjugating enzyme]-L-cysteine + N(6)-ubiquitinyl-[acceptor protein]-L-lysine.. Functionally, E3 ubiquitin-protein ligase that is essential for proper development of the forebrain, the eye, and the face. Catalyzes monoubiquitination of serine/threonine-protein phosphatase 2A (PP2A) catalytic subunit PPP2CA/PPP2CB. Negatively regulates nitric oxide production by inducing NOS1 and NOS3 translocation to actin cytoskeleton and inhibiting their enzymatic activity. This is Nitric oxide synthase-interacting protein (NOSIP) from Homo sapiens (Human).